The primary structure comprises 98 residues: U-scoloptoxin(16)-Er9a (98 aa).

The signal sequence occupies residues 1-24; it reads MVSYLCMSVSSGWLSIGKIAIKDG.

The protein belongs to the scoloptoxin-16 family. Post-translationally, contains 4 disulfide bonds. Expressed by the venom gland.

Its subcellular location is the secreted. This chain is U-scoloptoxin(16)-Er9a, found in Ethmostigmus rubripes (Giant centipede).